Reading from the N-terminus, the 341-residue chain is Serine/threonine-protein kinase PDIK1L (341 aa).

The region spanning 8–334 is the Protein kinase domain; that stretch reads YDLIREVGRG…LELRLVQIAF (327 aa). ATP contacts are provided by residues 14-22 and K37; that span reads VGRGSYGVV. D164 functions as the Proton acceptor in the catalytic mechanism.

Belongs to the protein kinase superfamily. Ser/Thr protein kinase family. As to expression, expressed in liver, kidney, pancreas, spleen, thymus and prostate.

Its subcellular location is the nucleus. It catalyses the reaction L-seryl-[protein] + ATP = O-phospho-L-seryl-[protein] + ADP + H(+). The enzyme catalyses L-threonyl-[protein] + ATP = O-phospho-L-threonyl-[protein] + ADP + H(+). This Homo sapiens (Human) protein is Serine/threonine-protein kinase PDIK1L (PDIK1L).